The sequence spans 551 residues: Formate--tetrahydrofolate ligase (551 aa).

54-61 lines the ATP pocket; sequence TPPGEGKT.

This sequence belongs to the formate--tetrahydrofolate ligase family.

The catalysed reaction is (6S)-5,6,7,8-tetrahydrofolate + formate + ATP = (6R)-10-formyltetrahydrofolate + ADP + phosphate. It participates in one-carbon metabolism; tetrahydrofolate interconversion. The chain is Formate--tetrahydrofolate ligase from Myxococcus xanthus (strain DK1622).